The primary structure comprises 280 residues: RAD52 motif-containing protein 1 (280 aa).

Residues 18 to 101 form the RRM domain; it reads KTIFIWDIQP…SPLKVRLSTK (84 aa).

Homodimer.

It is found in the nucleus. It localises to the cytoplasm. Its subcellular location is the nucleolus. Functionally, may confer resistance to the antitumor agent cisplatin. Binds to DNA and RNA. This Danio rerio (Zebrafish) protein is RAD52 motif-containing protein 1 (rdm1).